The sequence spans 3117 residues: Centrosome-associated protein 350 (3117 aa).

The interval 1 to 24 is disordered; that stretch reads MRSSKSKEVPLPNPRNSQSKDTVQ. The segment covering 14 to 24 has biased composition (polar residues); the sequence is PRNSQSKDTVQ. Serine 86, serine 139, serine 142, and serine 218 each carry phosphoserine. Disordered stretches follow at residues 249–275, 436–514, 548–625, and 671–722; these read PKAL…ILKR, ILGP…NKQE, TVEL…TEQK, and LEEP…PPQP. Low complexity predominate over residues 255–267; that stretch reads TDSSPSSTSTSNS. Positions 469–501 are enriched in basic and acidic residues; that stretch reads GRAESDPRLDVLHRHLQRNSERSRSKSRSENNI. Phosphoserine occurs at positions 473 and 507. The span at 563–573 shows a compositional bias: basic residues; it reads PRSHSPVKRKP. Basic and acidic residues-rich tracts occupy residues 591-625 and 694-703; these read YDTD…TEQK and ESDKENKVQE. Residues 598 to 645 adopt a coiled-coil conformation; that stretch reads QYIVRQQEERKRKQNEEKKAQKEATEQKNKRLQELYRKQKEAFTKVKN. Serine 695 carries the phosphoserine modification. Residues 705-718 are compositionally biased toward low complexity; that stretch reads PPSASSSSDMSLSE. Position 878 is a phosphothreonine (threonine 878). Phosphoserine is present on serine 939. Over residues 981–992 the composition is skewed to low complexity; it reads SVSEGPLLSEGS. Positions 981-1002 are disordered; that stretch reads SVSEGPLLSEGSLSEEEGDQDG. Serine 1061 carries the phosphoserine modification. The interval 1081–1298 is disordered; the sequence is EDKLDRGTST…GFKPNAPLTD (218 aa). Positions 1087–1102 are enriched in polar residues; sequence GTSTSRPLNATATPLS. Over residues 1135 to 1144 the composition is skewed to basic and acidic residues; it reads QEDHSNRKSA. 2 stretches are compositionally biased toward low complexity: residues 1153–1172 and 1251–1267; these read TSQH…STSS and QKTP…KSLQ. Residue threonine 1253 is modified to Phosphothreonine. 2 positions are modified to phosphoserine: serine 1256 and serine 1259. The span at 1272 to 1283 shows a compositional bias: polar residues; that stretch reads GTSSERSKSSVM. A coiled-coil region spans residues 1369 to 1411; that stretch reads IKAQQQRHERDLALLKLKAEQEALESQRQLEETRNKAAQVHAE. Disordered regions lie at residues 1494–1674 and 1794–1854; these read TRTE…GGQD and KLKS…SRMD. Residues 1503–1512 are compositionally biased toward polar residues; the sequence is PSVSLSQSKE. Low complexity-rich tracts occupy residues 1522–1535 and 1543–1556; these read YSAS…SSGY and SSGS…SVPS. Positions 1558-1571 are enriched in basic and acidic residues; the sequence is KENEKKLNGEKIES. Residue serine 1613 is modified to Phosphoserine. Residues 1631-1647 are compositionally biased toward basic and acidic residues; it reads ESHRRFNMEKRRGHHDD. Phosphoserine occurs at positions 1648 and 1653. Positions 1707-1800 form a coiled coil; sequence KALKEKTKAE…LQEKLKSAGE (94 aa). Residues 1794-1815 show a composition bias toward basic and acidic residues; it reads KLKSAGESKLDSHSDDDTKDNK. A Phosphoserine modification is found at serine 1818. A compositionally biased stretch (low complexity) spans 1827 to 1841; the sequence is RSPSPISISSSETSS. The stretch at 1856 to 1899 forms a coiled coil; it reads KFLTKREQKLMQRRQHAEELLEWKRRLDAEEAEIRQMEKQALAA. Positions 1903 to 1925 are enriched in basic and acidic residues; sequence ELIKPKTPKKELEDQRTEQKEIA. 4 disordered regions span residues 1903–2020, 2107–2221, 2329–2356, and 2407–2432; these read ELIK…QCHL, ELSQ…ESGD, LKER…QKNT, and KDSQ…FGSN. At serine 1936 the chain carries Phosphoserine. Residues 1983–2005 are compositionally biased toward polar residues; that stretch reads ELESSTSPSKHSLPKSCTSVSKQ. Residues 2051 to 2110 are a coiled coil; that stretch reads EGRIRALKDELRKRKSVVNQLKKEQKKRQKERLKAQEASLIKQLESYDEFIKKTEAELSQ. A compositionally biased stretch (polar residues) spans 2111 to 2129; sequence DLETSPTAKPQIKTLSSAS. Serine 2115 carries the phosphoserine modification. Residues 2141-2170 show a composition bias toward basic and acidic residues; sequence HRSETAKNWKSLTESERSRGSLESIAEHVD. Over residues 2173–2184 the composition is skewed to polar residues; the sequence is LSGSERSVSERS. Basic and acidic residues predominate over residues 2191–2201; it reads RVNEWDSRTED. Threonine 2204 is modified (phosphothreonine). A Phosphoserine modification is found at serine 2206. Basic and acidic residues-rich tracts occupy residues 2329–2338 and 2407–2417; these read LKERQSDQDM and KDSQSCRDKPQ. Positions 2419–2432 are enriched in polar residues; that stretch reads MRSSTSGATSFGSN. Phosphoserine occurs at positions 2431 and 2460. Residues 2465-2478 are compositionally biased toward basic and acidic residues; sequence MKSKERSDVEHEQQ. Residues 2465–2485 form a disordered region; sequence MKSKERSDVEHEQQVTESPSL. The 43-residue stretch at 2517–2559 folds into the CAP-Gly domain; that stretch reads GETSFAKGFWAGVELDKPEGNNNGTYDGIAYFECKEKHGIFAP. Residue threonine 2689 is modified to Phosphothreonine. The stretch at 2719–2752 forms a coiled coil; sequence LLDLLTREKNQLEAQLKSSLNEEKKSKQQLEKIS. A phosphoserine mark is found at serine 2830 and serine 2839.

As to quaternary structure, part of a ternary complex that contains CEP350, CEP43 and MAPRE1. Interacts (via C-terminus) directly with CEP43 (via N-terminus). Interacts with NR1H3, PPARA, PPARD and PPARG. Interacts directly with microtubules. Interacts with the fusion protein CEP43-FGFR1, and by doing so recruits and activates PI3K and PLC-gamma. Interacts with CYLD. Interacts with CFAP157. Interacts with CEP19 (via C-terminus). Interacts with CEP78; promoting CEP78 localization to centrosome and centriole. Post-translationally, phosphorylated during mitosis. Detected in heart, brain, skeletal muscle, testis, placenta, lung, liver, kidney and pancreas.

Its subcellular location is the cytoplasm. It localises to the cytoskeleton. The protein resides in the microtubule organizing center. The protein localises to the centrosome. It is found in the spindle. Its subcellular location is the nucleus. It localises to the centriole. The protein resides in the cilium basal body. Functionally, plays an essential role in centriole growth by stabilizing a procentriolar seed composed of at least, SASS6 and CPAP. Required for anchoring microtubules to the centrosomes and for the integrity of the microtubule network. Recruits PPARA to discrete subcellular compartments and thereby modulates PPARA activity. Required for ciliation. This chain is Centrosome-associated protein 350, found in Homo sapiens (Human).